A 130-amino-acid chain; its full sequence is Small ribosomal subunit protein uS8 (130 aa).

This sequence belongs to the universal ribosomal protein uS8 family. In terms of assembly, part of the 30S ribosomal subunit. Contacts proteins S5 and S12.

Functionally, one of the primary rRNA binding proteins, it binds directly to 16S rRNA central domain where it helps coordinate assembly of the platform of the 30S subunit. This is Small ribosomal subunit protein uS8 from Aster yellows witches'-broom phytoplasma (strain AYWB).